The chain runs to 382 residues: 2-carboxy-1,4-naphthoquinone phytyltransferase, chloroplastic (382 aa).

The transit peptide at 1–66 (MVNFVSLCDI…RRNLRVRPIF (66 aa)) directs the protein to the chloroplast. A run of 8 helical transmembrane segments spans residues 99–119 (VALVPLTVGASAAYLETGLFL), 123–143 (YVTLLLSSILIITWLNLSNDV), 168–188 (TLAAAITSLALGVSGLVWTSL), 196–216 (ILLLASAILCGYVYQCPPFRL), 224–244 (PLCFAAFGPFATTAFYLLLGS), 257–277 (VLSSSVLVGFTTSLILFCSHF), 323–343 (ILPLPCTLMCFLTLPVGNLVS), and 361–381 (YYCVRLHALLGAALSLGLVIA).

This sequence belongs to the MenA family. Type 2 subfamily.

The protein resides in the plastid. It is found in the chloroplast membrane. The catalysed reaction is 2-carboxy-1,4-naphthoquinone + phytyl diphosphate + H(+) = demethylphylloquinone + CO2 + diphosphate. In terms of biological role, involved in the synthesis of phylloquinone (vitamin K1). Catalyzes the transfer of a prenyl chain to 2-carboxy-1,4-naphthoquinone. This chain is 2-carboxy-1,4-naphthoquinone phytyltransferase, chloroplastic (ABC4), found in Arabidopsis thaliana (Mouse-ear cress).